The chain runs to 417 residues: Serine--tRNA ligase (417 aa).

232 to 234 (TAE) is an L-serine binding site. 263–265 (RKE) provides a ligand contact to ATP. Glu286 serves as a coordination point for L-serine. Position 350–353 (350–353 (EISS)) interacts with ATP. L-serine is bound at residue Ser385.

It belongs to the class-II aminoacyl-tRNA synthetase family. Type-1 seryl-tRNA synthetase subfamily. In terms of assembly, homodimer. The tRNA molecule binds across the dimer.

The protein localises to the cytoplasm. It carries out the reaction tRNA(Ser) + L-serine + ATP = L-seryl-tRNA(Ser) + AMP + diphosphate + H(+). The enzyme catalyses tRNA(Sec) + L-serine + ATP = L-seryl-tRNA(Sec) + AMP + diphosphate + H(+). It participates in aminoacyl-tRNA biosynthesis; selenocysteinyl-tRNA(Sec) biosynthesis; L-seryl-tRNA(Sec) from L-serine and tRNA(Sec): step 1/1. In terms of biological role, catalyzes the attachment of serine to tRNA(Ser). Is also able to aminoacylate tRNA(Sec) with serine, to form the misacylated tRNA L-seryl-tRNA(Sec), which will be further converted into selenocysteinyl-tRNA(Sec). The chain is Serine--tRNA ligase from Sulfurihydrogenibium sp. (strain YO3AOP1).